Reading from the N-terminus, the 71-residue chain is Movement protein TGBp3 (71 aa).

Residues 1–4 (MWSD) are Lumenal-facing. Residues 5–27 (SLVSRICVPIIVVCTSIALLNVV) form a helical membrane-spanning segment. The Cytoplasmic portion of the chain corresponds to 28–71 (SFRSECSCVVHISGAAIDIRGCSFTPDFIEYAKTLRVFNHRYQE).

The protein belongs to the Tymovirales TGBp3 protein family.

It localises to the host endoplasmic reticulum membrane. Its function is as follows. Plays a role in viral cell-to-cell propagation, by facilitating genome transport to neighboring plant cells through plasmosdesmata. May induce the formation of granular vesicles derived from the Endoplasmic reticulum, which align on actin filaments. The polypeptide is Movement protein TGBp3 (Populus balsamifera (Balsam poplar)).